The sequence spans 342 residues: Tryptophan--tRNA ligase (342 aa).

ATP-binding positions include 19 to 21 and 27 to 28; these read QPS and GN. The 'HIGH' region motif lies at 20 to 28; that stretch reads PSGELTIGN. Asp143 contributes to the L-tryptophan binding site. Residues 155-157, Val194, and 203-207 contribute to the ATP site; these read GED and KMSKS. Residues 203 to 207 carry the 'KMSKS' region motif; the sequence is KMSKS.

Belongs to the class-I aminoacyl-tRNA synthetase family. In terms of assembly, homodimer.

The protein localises to the cytoplasm. The enzyme catalyses tRNA(Trp) + L-tryptophan + ATP = L-tryptophyl-tRNA(Trp) + AMP + diphosphate + H(+). Functionally, catalyzes the attachment of tryptophan to tRNA(Trp). This Yersinia pestis protein is Tryptophan--tRNA ligase.